A 150-amino-acid chain; its full sequence is Monooxygenase dmxR10 (150 aa).

Belongs to the avfA family.

The protein operates within secondary metabolite biosynthesis. Its function is as follows. Monooxygenase; part of the gene cluster that mediates the biosynthesis of the dimeric xanthones cryptosporioptides. The pathway begins with the synthesis of atrochrysone thioester by the polyketide synthase dmx-nrPKS. The atrochrysone carboxyl ACP thioesterase dmxR1 then breaks the thioester bond and releases the atrochrysone carboxylic acid from dmx-nrPKS. Atrochrysone carboxylic acid is decarboxylated by the decarboxylase dmxR15, and oxidized by the anthrone oxygenase dmxR16 to yield emodin. Emodin is then reduced to emodin hydroquinone by the oxidoreductase dmxR7. A-ring reduction by the short chain dehydrogenase dmxR18, dehydration by the scytalone dehydratase-like protein dmxR17 and probable spontaneous re-oxidation, results in overall deoxygenation to chrysophanol. Baeyer-Villiger oxidation by the Baeyer-Villiger monooxygenase (BVMO) dmxR6 then yields monodictylactone in equilibrium with monodictyphenone. In the case of the cryptosporioptides biosynthesis, monodictylactone is reduced at C-12 to an alcohol (by the short chain dehydrogenases dmxR12 or dmxR8) and hydroxylated at C-5 by dmxR9, yielding the electron-rich aromatic which could eliminate H(2)O to form the ortho-quinonemethide, followed by tautomerisation to paraquinone and complete the formal reduction to produce the 10-methylgroup. Conjugate addition of C-4a-OH to the resulting paraquinone by the monooxygenase dmxR10 then gives cyclohexadienone, which is then reduced at C-5 by the short chain dehydrogenase dmxR3 to give the dihydroxanthone. The 6,7-epoxide in the cryptosporioptides could be introduced by the cytochrome P450 monooxygenase dmxL3. The highly reducing PKS dmxL2 manufactures butyrate, which is further carboxylated by dmxL1 to form ethylmalonate. It is not yet clear whether the carboxylation occurs while the butyrate is attached to the ACP of dmxL2, but this unusual fungal metabolite could then be esterified to O-5 by the O-acetyltransferase dmxR13. Finally, dimerization performed by dmxR5 gives the observed dimers cryptosporioptides A, B and C as the final products of the pathway. The polypeptide is Monooxygenase dmxR10 (Cryptosporiopsis sp. (strain 8999)).